Reading from the N-terminus, the 382-residue chain is Acetylserotonin O-methyltransferase (382 aa).

S-adenosyl-L-homocysteine contacts are provided by Gly218, Asp241, Asp261, Met262, and Lys275. The active-site Proton acceptor is His279. Residues Glu308 and Glu347 contribute to the active site.

This sequence belongs to the class I-like SAM-binding methyltransferase superfamily. Cation-independent O-methyltransferase family.

It localises to the cytoplasm. The enzyme catalyses N-acetylserotonin + S-adenosyl-L-methionine = melatonin + S-adenosyl-L-homocysteine + H(+). Its pathway is aromatic compound metabolism; melatonin biosynthesis; melatonin from serotonin: step 1/2. In terms of biological role, methyltransferase which catalyzes the transfer of a methyl group onto N-acetylserotonin, producing melatonin (N-acetyl-5-methoxytryptamine). Does not seem to possess caffeate O-methyltransferase activity. Implicated in melatonin-dependent circadian dynamics of stomatal aperture to minimize night water loss and promote drought tolerance. Prevents seed germination by promoting melatonin biosynthesis. Promotes melatonin-triggered defense responses to the necrotrophic fungus Botrytis cinerea. (Microbial infection) Promotes melatonin-triggered defense responses to the necrotrophic fungus Botrytis cinerea. The chain is Acetylserotonin O-methyltransferase from Arabidopsis thaliana (Mouse-ear cress).